The sequence spans 475 residues: Methyltransferase-like protein 25B (475 aa).

Residues 186–210 are a coiled coil; the sequence is QRLVERAQRLDQELLQTLEKEEKRN. The helical transmembrane segment at 406 to 426 threads the bilayer; that stretch reads VVAFFSLALLLAPLVETLILL.

Belongs to the METTL25 family.

It localises to the membrane. In Bos taurus (Bovine), this protein is Methyltransferase-like protein 25B.